Reading from the N-terminus, the 504-residue chain is UDP-N-acetylmuramoylalanine--D-glutamate ligase (504 aa).

129-135 (GTNGKTT) serves as a coordination point for ATP.

This sequence belongs to the MurCDEF family.

Its subcellular location is the cytoplasm. It catalyses the reaction UDP-N-acetyl-alpha-D-muramoyl-L-alanine + D-glutamate + ATP = UDP-N-acetyl-alpha-D-muramoyl-L-alanyl-D-glutamate + ADP + phosphate + H(+). It functions in the pathway cell wall biogenesis; peptidoglycan biosynthesis. In terms of biological role, cell wall formation. Catalyzes the addition of glutamate to the nucleotide precursor UDP-N-acetylmuramoyl-L-alanine (UMA). The sequence is that of UDP-N-acetylmuramoylalanine--D-glutamate ligase from Cupriavidus metallidurans (strain ATCC 43123 / DSM 2839 / NBRC 102507 / CH34) (Ralstonia metallidurans).